We begin with the raw amino-acid sequence, 246 residues long: Caffeoyl-CoA O-methyltransferase 1 (246 aa).

A substrate-binding site is contributed by lysine 21. Residues threonine 63, glutamate 85, 87-88 (GV), serine 93, aspartate 111, and alanine 140 contribute to the S-adenosyl-L-methionine site. Aspartate 162 is a substrate binding site. Residue aspartate 162 coordinates a divalent metal cation. Position 164 (aspartate 164) interacts with S-adenosyl-L-methionine. Aspartate 188 and asparagine 189 together coordinate a divalent metal cation. Residue asparagine 193 coordinates substrate.

This sequence belongs to the class I-like SAM-binding methyltransferase superfamily. Cation-dependent O-methyltransferase family. CCoAMT subfamily. Requires a divalent metal cation as cofactor.

It carries out the reaction (E)-caffeoyl-CoA + S-adenosyl-L-methionine = (E)-feruloyl-CoA + S-adenosyl-L-homocysteine + H(+). It participates in aromatic compound metabolism; phenylpropanoid biosynthesis. In terms of biological role, methylates caffeoyl-CoA to feruloyl-CoA and 5-hydroxyferuloyl-CoA to sinapoyl-CoA. Plays a role in the synthesis of feruloylated polysaccharides. Involved in the reinforcement of the plant cell wall. Also involved in the responding to wounding or pathogen challenge by the increased formation of cell wall-bound ferulic acid polymers. The protein is Caffeoyl-CoA O-methyltransferase 1 (CCOMT) of Eucalyptus globulus (Tasmanian blue gum).